The following is a 435-amino-acid chain: Amino acid transporter AVT6C (435 aa).

Positions 1–24 (MTPQIKTHLLPKQEPSSSENHGSS) are disordered. The next 11 membrane-spanning stretches (helical) occupy residues 28–48 (IVFN…PAAF), 53–73 (IVPA…SVGF), 100–120 (IAVQ…FSII), 148–168 (WNTR…PLVL), 181–201 (VSFL…ISAL), 219–239 (GSFW…TFHF), 260–280 (ISVI…YLLF), 307–327 (IVRL…NFSL), 354–374 (LALL…WYFF), 375–395 (QFMG…AIVL), and 408–428 (IVAA…ISTN).

This sequence belongs to the amino acid/polyamine transporter 2 family. Amino acid/auxin permease (AAAP) (TC 2.A.18.6) subfamily.

The protein localises to the membrane. The sequence is that of Amino acid transporter AVT6C from Arabidopsis thaliana (Mouse-ear cress).